The primary structure comprises 305 residues: Coenzyme PQQ synthesis protein B (305 aa).

Belongs to the PqqB family.

Its pathway is cofactor biosynthesis; pyrroloquinoline quinone biosynthesis. In terms of biological role, may be involved in the transport of PQQ or its precursor to the periplasm. This chain is Coenzyme PQQ synthesis protein B, found in Methylobacillus flagellatus.